A 388-amino-acid chain; its full sequence is Palmitoyltransferase ZDHHC18-B (388 aa).

Residues 1–33 (MKNREYQQIDPQALATPTPTPPPRSLPEHKPRR) form a disordered region. The Cytoplasmic segment spans residues 1-58 (MKNREYQQIDPQALATPTPTPPPRSLPEHKPRRARRKWEVFPGKNRFYCDGRIIVARQ). Residues 59–79 (SGVLPLTLGLILLTSGLFFIF) traverse the membrane as a helical segment. Over 80–87 (DCPFLVKH) the chain is Lumenal. A helical membrane pass occupies residues 88–108 (LTSCIPAIGGVLFVFVIISLL). Residues 109–205 (QTSFTDPGIL…GNCVGKRNYR (97 aa)) are Cytoplasmic-facing. The region spanning 162 to 212 (KYCFTCKIFRPPRTSHCSLCDNCVERFDHHCPWVGNCVGKRNYRFFYTFIV) is the DHHC domain. The active-site S-palmitoyl cysteine intermediate is Cys-192. A helical membrane pass occupies residues 206–226 (FFYTFIVSLSFLTAFIFGCVT). Residues 227–253 (THLALRSQGGNGLVNALQSSPASALEL) are Lumenal-facing. A helical transmembrane segment spans residues 254 to 274 (VVCFFSVWSILGLSGFHTYLV). Topologically, residues 275–388 (AANLTTNEDI…AISMQNHSTA (114 aa)) are cytoplasmic.

The protein belongs to the DHHC palmitoyltransferase family. ERF2/ZDHHC9 subfamily.

The protein resides in the golgi apparatus membrane. The catalysed reaction is L-cysteinyl-[protein] + hexadecanoyl-CoA = S-hexadecanoyl-L-cysteinyl-[protein] + CoA. Its function is as follows. Palmitoyltransferase that catalyzes the addition of palmitate onto various protein substrates, such as CGAS, HRAS and LCK. This chain is Palmitoyltransferase ZDHHC18-B, found in Danio rerio (Zebrafish).